A 320-amino-acid polypeptide reads, in one-letter code: tRNA uridine(34) hydroxylase (320 aa).

The region spanning 123-217 (EDENTVILDA…YGKDPETKGQ (95 aa)) is the Rhodanese domain. C177 acts as the Cysteine persulfide intermediate in catalysis.

It belongs to the TrhO family.

The catalysed reaction is uridine(34) in tRNA + AH2 + O2 = 5-hydroxyuridine(34) in tRNA + A + H2O. Its function is as follows. Catalyzes oxygen-dependent 5-hydroxyuridine (ho5U) modification at position 34 in tRNAs. The chain is tRNA uridine(34) hydroxylase from Staphylococcus epidermidis (strain ATCC 12228 / FDA PCI 1200).